The primary structure comprises 221 residues: Transcriptional regulator GfcR (221 aa).

Residues 35-59 (ASWLVERSQPTDNSQSSSANNPTEA) form a disordered region. Polar residues predominate over residues 42 to 57 (SQPTDNSQSSSANNPT).

Belongs to the purine/pyrimidine phosphoribosyltransferase family. GfcR subfamily.

Its function is as follows. DNA-binding transcriptional regulator that functions as a regulator of central sugar catabolic pathways. This is Transcriptional regulator GfcR from Haloquadratum walsbyi (strain DSM 16790 / HBSQ001).